The following is a 235-amino-acid chain: Pro-opiomelanocortin (235 aa).

An N-terminal signal peptide occupies residues 1–26 (MPRFCNSRSGALLLALLLQTSIDVWS). Residue Phe87 is modified to Phenylalanine amide. A disordered region spans residues 88 to 128 (GPRNSSSAGGSAQRRAEEETAGGDGRPEPSPREGKRSYSME). The span at 112–128 (GRPEPSPREGKRSYSME) shows a compositional bias: basic and acidic residues. Residue Ser124 is modified to N-acetylserine; in Corticotropin. Position 136 is a valine amide (Val136). An N-linked (GlcNAc...) asparagine glycan is attached at Asn152. Ser154 bears the Phosphoserine mark. A disordered region spans residues 169-209 (EQPDGLEQVLEPDTEKADGPYRVEHFRWGNPPKDKRYGGFM). The span at 181-205 (DTEKADGPYRVEHFRWGNPPKDKRY) shows a compositional bias: basic and acidic residues.

The protein belongs to the POMC family. In terms of processing, specific enzymatic cleavages at paired basic residues yield the different active peptides. In terms of tissue distribution, ACTH and MSH are produced by the pituitary gland.

Its subcellular location is the secreted. Its function is as follows. Stimulates the adrenal glands to release cortisol. Functionally, anorexigenic peptide. Increases the pigmentation of skin by increasing melanin production in melanocytes. Increases the pigmentation of skin by increasing melanin production in melanocytes. In terms of biological role, endogenous orexigenic opiate. Its function is as follows. Endogenous opiate. This Rattus norvegicus (Rat) protein is Pro-opiomelanocortin (Pomc).